The chain runs to 595 residues: Elongation factor 4 (595 aa).

The tr-type G domain maps to 2–184; it reads SHIRNFSIIA…RLVATIPAPT (183 aa). Residues 14–19 and 131–134 each bind GTP; these read DHGKST and NKMD.

Belongs to the TRAFAC class translation factor GTPase superfamily. Classic translation factor GTPase family. LepA subfamily.

The protein resides in the cell inner membrane. The catalysed reaction is GTP + H2O = GDP + phosphate + H(+). In terms of biological role, required for accurate and efficient protein synthesis under certain stress conditions. May act as a fidelity factor of the translation reaction, by catalyzing a one-codon backward translocation of tRNAs on improperly translocated ribosomes. Back-translocation proceeds from a post-translocation (POST) complex to a pre-translocation (PRE) complex, thus giving elongation factor G a second chance to translocate the tRNAs correctly. Binds to ribosomes in a GTP-dependent manner. The sequence is that of Elongation factor 4 from Pseudomonas savastanoi pv. phaseolicola (strain 1448A / Race 6) (Pseudomonas syringae pv. phaseolicola (strain 1448A / Race 6)).